The primary structure comprises 147 residues: Peptide deformylase (147 aa).

The Fe cation site is built by cysteine 88 and histidine 130. Residue glutamate 131 is part of the active site. A Fe cation-binding site is contributed by histidine 134.

This sequence belongs to the polypeptide deformylase family. Requires Fe(2+) as cofactor.

It carries out the reaction N-terminal N-formyl-L-methionyl-[peptide] + H2O = N-terminal L-methionyl-[peptide] + formate. In terms of biological role, removes the formyl group from the N-terminal Met of newly synthesized proteins. Requires at least a dipeptide for an efficient rate of reaction. N-terminal L-methionine is a prerequisite for activity but the enzyme has broad specificity at other positions. This is Peptide deformylase from Alkaliphilus metalliredigens (strain QYMF).